The chain runs to 138 residues: Large ribosomal subunit protein uL16 (138 aa).

Residues 1–13 (MLQPKRRKYRKEQ) are compositionally biased toward basic residues. Residues 1–20 (MLQPKRRKYRKEQKGRNTGI) form a disordered region.

Belongs to the universal ribosomal protein uL16 family. In terms of assembly, part of the 50S ribosomal subunit.

Its function is as follows. Binds 23S rRNA and is also seen to make contacts with the A and possibly P site tRNAs. In Ralstonia nicotianae (strain ATCC BAA-1114 / GMI1000) (Ralstonia solanacearum), this protein is Large ribosomal subunit protein uL16.